We begin with the raw amino-acid sequence, 388 residues long: Phosphoglycerate kinase (388 aa).

Residues 21–23, R36, 59–62, R114, and R147 each bind substrate; these read DLN and HLGR. Residues K198, E315, and 341–344 contribute to the ATP site; that span reads GGDT.

It belongs to the phosphoglycerate kinase family. As to quaternary structure, monomer.

It localises to the cytoplasm. The enzyme catalyses (2R)-3-phosphoglycerate + ATP = (2R)-3-phospho-glyceroyl phosphate + ADP. The protein operates within carbohydrate degradation; glycolysis; pyruvate from D-glyceraldehyde 3-phosphate: step 2/5. The polypeptide is Phosphoglycerate kinase (Hahella chejuensis (strain KCTC 2396)).